The primary structure comprises 812 residues: Probable inorganic carbon transporter subunit DabA (812 aa).

Positions 337, 339, 499, and 514 each coordinate Zn(2+).

This sequence belongs to the inorganic carbon transporter (TC 9.A.2) DabA family. In terms of assembly, forms a complex with DabB. It depends on Zn(2+) as a cofactor.

It localises to the cell inner membrane. Its function is as follows. Part of an energy-coupled inorganic carbon pump. This chain is Probable inorganic carbon transporter subunit DabA, found in Xanthomonas oryzae pv. oryzae (strain MAFF 311018).